The sequence spans 155 residues: Ribonuclease H (155 aa).

Residues 4-145 (QQKVVEIYTD…ADALARKAIT (142 aa)) form the RNase H type-1 domain. Mg(2+) is bound by residues Asp13, Glu51, Asp73, and Asp137.

The protein belongs to the RNase H family. As to quaternary structure, monomer. It depends on Mg(2+) as a cofactor.

Its subcellular location is the cytoplasm. It carries out the reaction Endonucleolytic cleavage to 5'-phosphomonoester.. Its function is as follows. Endonuclease that specifically degrades the RNA of RNA-DNA hybrids. The polypeptide is Ribonuclease H (Bartonella quintana (strain Toulouse) (Rochalimaea quintana)).